Here is an 884-residue protein sequence, read N- to C-terminus: Alanine--tRNA ligase (884 aa).

Zn(2+)-binding residues include histidine 562, histidine 566, cysteine 674, and histidine 678.

This sequence belongs to the class-II aminoacyl-tRNA synthetase family. The cofactor is Zn(2+).

Its subcellular location is the cytoplasm. It carries out the reaction tRNA(Ala) + L-alanine + ATP = L-alanyl-tRNA(Ala) + AMP + diphosphate. Functionally, catalyzes the attachment of alanine to tRNA(Ala) in a two-step reaction: alanine is first activated by ATP to form Ala-AMP and then transferred to the acceptor end of tRNA(Ala). Also edits incorrectly charged Ser-tRNA(Ala) and Gly-tRNA(Ala) via its editing domain. The sequence is that of Alanine--tRNA ligase from Rhizobium johnstonii (strain DSM 114642 / LMG 32736 / 3841) (Rhizobium leguminosarum bv. viciae).